The following is a 169-amino-acid chain: Disulfide bond formation protein B (169 aa).

The Cytoplasmic portion of the chain corresponds to 1-14 (MMRFLNHCSQGRSA). A helical transmembrane segment spans residues 15-31 (WLLMILTALILESSALY). At 32 to 49 (FQHVMKLQPCVMCIYERV) the chain is on the periplasmic side. Cysteines 41 and 44 form a disulfide. The helical transmembrane segment at 50–65 (ALFGVLSAGILGVIAP) threads the bilayer. The Cytoplasmic segment spans residues 66-71 (KTPLRW). Residues 72–89 (LAIILWIYSAWGGLQLAW) form a helical membrane-spanning segment. The Periplasmic portion of the chain corresponds to 90 to 144 (QHTMMQLHPSPFNTCDFFVNFPSWLALNQWLPSVFEATGDCSVRQWQFLTLEMPQ). An intrachain disulfide couples Cys-104 to Cys-130. The helical transmembrane segment at 145–163 (WLVGIFAAYLVVAALVLIS) threads the bilayer. The Cytoplasmic portion of the chain corresponds to 164 to 169 (QFFSRK).

Belongs to the DsbB family.

It localises to the cell inner membrane. In terms of biological role, required for disulfide bond formation in some periplasmic proteins. Acts by oxidizing the DsbA protein. The sequence is that of Disulfide bond formation protein B from Photorhabdus laumondii subsp. laumondii (strain DSM 15139 / CIP 105565 / TT01) (Photorhabdus luminescens subsp. laumondii).